The chain runs to 340 residues: Immunoglobulin-binding protein 1 (340 aa).

One can recognise a UIM domain in the interval 47–61; sequence LELLEKAAGMLSQLD. The tract at residues 99-203 is interaction with PPP2CA; sequence RLDHLQRARE…YLLHLRRWIG (105 aa). Disordered stretches follow at residues 221–242 and 281–340; these read DKDS…PPMK and LPDR…QNMG. An interaction with MID1 region spans residues 226–291; the sequence is REESACQSSL…PDRGIAKPPS (66 aa). Lys242 bears the N6-acetyllysine mark. Positions 292–301 are enriched in low complexity; it reads ADFQRAAQQQ. Residues 302-312 are compositionally biased toward acidic residues; it reads EDQEQKDEENE. Over residues 313–330 the composition is skewed to basic and acidic residues; it reads EKALHRMREWDDWKDTHP.

The protein belongs to the IGBP1/TAP42 family. Interacts with partially folded PPP2CA, but not with the fully active protein. Interacts with PPP2CB, and with PP4 and PP6. Interacts with MID1 and MID2. Interacts with ubiquitin. Phosphorylated. Post-translationally, monoubiquitination by MID1 triggers calpain-mediated cleavage and switches IGBP1 activity from protective to destructive.

It localises to the cytoplasm. Functionally, associated to surface IgM-receptor; may be involved in signal transduction. Involved in regulation of the catalytic activity of the phosphatases PP2A, PP4 and PP6 by protecting their partially folded catalytic subunits from degradative polyubiquitination until they associate with regulatory subunits. The sequence is that of Immunoglobulin-binding protein 1 (Igbp1) from Rattus norvegicus (Rat).